Consider the following 320-residue polypeptide: Tetraacyldisaccharide 4'-kinase (320 aa).

An ATP-binding site is contributed by Ser53–Thr60.

It belongs to the LpxK family.

The catalysed reaction is a lipid A disaccharide + ATP = a lipid IVA + ADP + H(+). Its pathway is glycolipid biosynthesis; lipid IV(A) biosynthesis; lipid IV(A) from (3R)-3-hydroxytetradecanoyl-[acyl-carrier-protein] and UDP-N-acetyl-alpha-D-glucosamine: step 6/6. Functionally, transfers the gamma-phosphate of ATP to the 4'-position of a tetraacyldisaccharide 1-phosphate intermediate (termed DS-1-P) to form tetraacyldisaccharide 1,4'-bis-phosphate (lipid IVA). This Psychromonas ingrahamii (strain DSM 17664 / CCUG 51855 / 37) protein is Tetraacyldisaccharide 4'-kinase.